The primary structure comprises 484 residues: Glutamyl-tRNA(Gln) amidotransferase subunit A (484 aa).

Residues Lys-77 and Ser-152 each act as charge relay system in the active site. The Acyl-ester intermediate role is filled by Ser-176.

This sequence belongs to the amidase family. GatA subfamily. Heterotrimer of A, B and C subunits.

The catalysed reaction is L-glutamyl-tRNA(Gln) + L-glutamine + ATP + H2O = L-glutaminyl-tRNA(Gln) + L-glutamate + ADP + phosphate + H(+). Allows the formation of correctly charged Gln-tRNA(Gln) through the transamidation of misacylated Glu-tRNA(Gln) in organisms which lack glutaminyl-tRNA synthetase. The reaction takes place in the presence of glutamine and ATP through an activated gamma-phospho-Glu-tRNA(Gln). The sequence is that of Glutamyl-tRNA(Gln) amidotransferase subunit A from Pseudomonas aeruginosa (strain LESB58).